Consider the following 427-residue polypeptide: Glutamate-1-semialdehyde 2,1-aminomutase (427 aa).

Lys265 carries the post-translational modification N6-(pyridoxal phosphate)lysine.

This sequence belongs to the class-III pyridoxal-phosphate-dependent aminotransferase family. HemL subfamily. As to quaternary structure, homodimer. It depends on pyridoxal 5'-phosphate as a cofactor.

The protein localises to the cytoplasm. It catalyses the reaction (S)-4-amino-5-oxopentanoate = 5-aminolevulinate. Its pathway is porphyrin-containing compound metabolism; protoporphyrin-IX biosynthesis; 5-aminolevulinate from L-glutamyl-tRNA(Glu): step 2/2. In Idiomarina loihiensis (strain ATCC BAA-735 / DSM 15497 / L2-TR), this protein is Glutamate-1-semialdehyde 2,1-aminomutase.